The primary structure comprises 256 residues: NifU-like protein, mitochondrial (256 aa).

Positions 196 to 199 (CTSC) match the CxxC motif motif.

It belongs to the NifU family. In terms of assembly, homodimer; in absence of BOL3, probably bridged by an iron-sulfure cluster. Interacts with BOL3. Interacts with apo-target proteins, such as ACO1, LYS4, ACO2 and SDH2.

Its subcellular location is the mitochondrion matrix. In terms of biological role, involved in iron homeostasis within the mitochondrion where it is involved in the assembly of iron-sulfur proteins. Together with BOL3, required during the last step of iron-sulfur protein assembly when the iron-sulfur cluster is inserted into the target protein. Required for protecting iron sulfur clusters from oxidative damage. The chain is NifU-like protein, mitochondrial (NFU1) from Saccharomyces cerevisiae (strain ATCC 204508 / S288c) (Baker's yeast).